A 159-amino-acid polypeptide reads, in one-letter code: S-ribosylhomocysteine lyase (159 aa).

Positions 53, 57, and 124 each coordinate Fe cation.

It belongs to the LuxS family. Homodimer. It depends on Fe cation as a cofactor.

The enzyme catalyses S-(5-deoxy-D-ribos-5-yl)-L-homocysteine = (S)-4,5-dihydroxypentane-2,3-dione + L-homocysteine. Its function is as follows. Involved in the synthesis of autoinducer 2 (AI-2) which is secreted by bacteria and is used to communicate both the cell density and the metabolic potential of the environment. The regulation of gene expression in response to changes in cell density is called quorum sensing. Catalyzes the transformation of S-ribosylhomocysteine (RHC) to homocysteine (HC) and 4,5-dihydroxy-2,3-pentadione (DPD). This chain is S-ribosylhomocysteine lyase, found in Porphyromonas gingivalis (strain ATCC 33277 / DSM 20709 / CIP 103683 / JCM 12257 / NCTC 11834 / 2561).